We begin with the raw amino-acid sequence, 313 residues long: Ribosomal RNA small subunit methyltransferase H (313 aa).

S-adenosyl-L-methionine-binding positions include 36-38, aspartate 56, phenylalanine 80, aspartate 102, and glutamine 109; that span reads GGH.

Belongs to the methyltransferase superfamily. RsmH family.

It is found in the cytoplasm. The enzyme catalyses cytidine(1402) in 16S rRNA + S-adenosyl-L-methionine = N(4)-methylcytidine(1402) in 16S rRNA + S-adenosyl-L-homocysteine + H(+). Specifically methylates the N4 position of cytidine in position 1402 (C1402) of 16S rRNA. In Actinobacillus pleuropneumoniae serotype 3 (strain JL03), this protein is Ribosomal RNA small subunit methyltransferase H.